A 290-amino-acid polypeptide reads, in one-letter code: Poly-beta-1,6-N-acetyl-D-glucosamine N-deacetylase (290 aa).

The N-terminal stretch at 1–28 (MKYRKLIILVLSILIILPVSTLDGHHIA) is a signal peptide. The NodB homology domain maps to 114–290 (RSVWINFDDM…KRWDGFHEKD (177 aa)).

This sequence belongs to the polysaccharide deacetylase family.

The protein resides in the secreted. It localises to the cell wall. Its function is as follows. Catalyzes the N-deacetylation of poly-beta-1,6-N-acetyl-D-glucosamine (PNAG, also referred to as PIA), a biofilm adhesin polysaccharide. N-deacetylation is crucial for attachment of the polysaccharide to the bacterial cell surface; it leads to the introduction of positive charges in the otherwise neutral PIA polymer, allowing electrostatic interactions. This is Poly-beta-1,6-N-acetyl-D-glucosamine N-deacetylase (icaB) from Staphylococcus aureus (strain Mu50 / ATCC 700699).